A 445-amino-acid chain; its full sequence is UNC93-like protein MFSD11 (445 aa).

Residues 8-28 (LLNIIILGIGFMFMFTAFQTS) traverse the membrane as a helical segment. Asparagine 40 carries an N-linked (GlcNAc...) asparagine glycan. The next 4 membrane-spanning stretches (helical) occupy residues 53–73 (AIIY…VAVI), 74–94 (GCQM…AMFI), 98–118 (TWSF…LWTA), and 138–158 (IFWA…YLAW). Asparagine 163 carries an N-linked (GlcNAc...) asparagine glycan. Transmembrane regions (helical) follow at residues 170–190 (RTVF…FFLI), 239–259 (MLLL…YSGV), 277–297 (LIGL…GLFG), 309–329 (PVVI…YLYM), 345–365 (AFIN…GLGD), 385–405 (APAF…AFFY), and 415–435 (LLIL…VEWG).

It belongs to the unc-93 family.

The protein localises to the membrane. This is UNC93-like protein MFSD11 (mfsd11) from Xenopus tropicalis (Western clawed frog).